The following is a 201-amino-acid chain: Guanylyl cyclase-activating protein 1 (201 aa).

Glycine 2 carries the N-myristoyl glycine lipid modification. Asparagine 3 is subject to Deamidated asparagine. EF-hand domains are found at residues 31–49 (SGQL…KNLS), 51–86 (SASQ…VLKG), 87–122 (KVEQ…IRAI), and 131–166 (TAEE…DQML). Residues aspartate 64, asparagine 66, aspartate 68, tyrosine 70, glutamate 75, aspartate 100, aspartate 102, asparagine 104, cysteine 106, glutamate 111, aspartate 144, asparagine 146, aspartate 148, glutamate 150, and glutamate 155 each contribute to the Ca(2+) site.

Homodimer. As to expression, in the retina, it is expressed in rod and cone photoreceptors.

It is found in the membrane. The protein localises to the photoreceptor inner segment. It localises to the cell projection. Its subcellular location is the cilium. The protein resides in the photoreceptor outer segment. Its function is as follows. Stimulates retinal guanylyl cyclase when free calcium ions concentration is low and inhibits guanylyl cyclase when free calcium ions concentration is elevated. This Ca(2+)-sensitive regulation of retinal guanylyl cyclase is a key event in recovery of the dark state of rod photoreceptors following light exposure. May be involved in cone photoreceptor light response and recovery of response in bright light. The sequence is that of Guanylyl cyclase-activating protein 1 (GUCA1A) from Homo sapiens (Human).